Here is a 408-residue protein sequence, read N- to C-terminus: DNA-directed RNA polymerase subunit Rpo1C (408 aa).

This sequence belongs to the RNA polymerase beta' chain family. In terms of assembly, part of the RNA polymerase complex.

The protein localises to the cytoplasm. The enzyme catalyses RNA(n) + a ribonucleoside 5'-triphosphate = RNA(n+1) + diphosphate. DNA-dependent RNA polymerase (RNAP) catalyzes the transcription of DNA into RNA using the four ribonucleoside triphosphates as substrates. Forms part of the jaw domain. The sequence is that of DNA-directed RNA polymerase subunit Rpo1C from Methanosarcina mazei (strain ATCC BAA-159 / DSM 3647 / Goe1 / Go1 / JCM 11833 / OCM 88) (Methanosarcina frisia).